Here is a 435-residue protein sequence, read N- to C-terminus: Nuclear hormone receptor family member nhr-136 (435 aa).

Positions 50 to 129 (PSNCKVCRHS…AGMNPSAIQA (80 aa)) form a DNA-binding region, nuclear receptor. 2 NR C4-type zinc fingers span residues 53-73 (CKVC…CNGC) and 89-112 (CLKM…CRAC). One can recognise an NR LBD domain in the interval 194–430 (RDIRKLDELI…RYTRISNLYE (237 aa)).

This sequence belongs to the nuclear hormone receptor family.

It localises to the nucleus. In terms of biological role, orphan nuclear receptor. This Caenorhabditis elegans protein is Nuclear hormone receptor family member nhr-136 (nhr-136).